A 228-amino-acid chain; its full sequence is 7-cyano-7-deazaguanine synthase (228 aa).

10 to 20 (FSGGQDSTTLA) provides a ligand contact to ATP. Residues Cys-190, Cys-205, Cys-208, and Cys-211 each contribute to the Zn(2+) site.

It belongs to the QueC family. It depends on Zn(2+) as a cofactor.

The enzyme catalyses 7-carboxy-7-deazaguanine + NH4(+) + ATP = 7-cyano-7-deazaguanine + ADP + phosphate + H2O + H(+). Its pathway is purine metabolism; 7-cyano-7-deazaguanine biosynthesis. In terms of biological role, catalyzes the ATP-dependent conversion of 7-carboxy-7-deazaguanine (CDG) to 7-cyano-7-deazaguanine (preQ(0)). This chain is 7-cyano-7-deazaguanine synthase, found in Helicobacter pylori (strain P12).